The chain runs to 214 residues: Urease accessory protein UreF (214 aa).

Residues 70–95 (AAAGEAGDAETDARTPSPAARAASRA) form a disordered region. Low complexity predominate over residues 83–95 (RTPSPAARAASRA).

Belongs to the UreF family. In terms of assembly, ureD, UreF and UreG form a complex that acts as a GTP-hydrolysis-dependent molecular chaperone, activating the urease apoprotein by helping to assemble the nickel containing metallocenter of UreC. The UreE protein probably delivers the nickel.

Its subcellular location is the cytoplasm. Its function is as follows. Required for maturation of urease via the functional incorporation of the urease nickel metallocenter. The sequence is that of Urease accessory protein UreF from Mycolicibacterium vanbaalenii (strain DSM 7251 / JCM 13017 / BCRC 16820 / KCTC 9966 / NRRL B-24157 / PYR-1) (Mycobacterium vanbaalenii).